A 117-amino-acid polypeptide reads, in one-letter code: Large ribosomal subunit protein uL18 (117 aa).

The protein belongs to the universal ribosomal protein uL18 family. As to quaternary structure, part of the 50S ribosomal subunit; part of the 5S rRNA/L5/L18/L25 subcomplex. Contacts the 5S and 23S rRNAs.

In terms of biological role, this is one of the proteins that bind and probably mediate the attachment of the 5S RNA into the large ribosomal subunit, where it forms part of the central protuberance. The polypeptide is Large ribosomal subunit protein uL18 (Haemophilus ducreyi (strain 35000HP / ATCC 700724)).